A 199-amino-acid chain; its full sequence is Cilia- and flagella-associated protein 20 (199 aa).

This sequence belongs to the CFAP20 family. Expressed in spermatocytes and chordotonal organs in sensory neurons of the antenna.

The protein resides in the nucleus. The protein localises to the nucleolus. It localises to the cell projection. It is found in the cilium. Its subcellular location is the cytoplasm. The protein resides in the cytoskeleton. The protein localises to the microtubule organizing center. It localises to the centrosome. It is found in the centriole. Its subcellular location is the flagellum. The protein resides in the cilium axoneme. Its function is as follows. Cilium- and flagellum-specific protein that plays a role in axonemal structure organization and motility. Microtubule inner protein (MIP) part of the dynein-decorated doublet microtubules (DMTs) in cilia axoneme, which is required for motile cilia beating. Involved in the regulation of the size and morphology of cilia. Required for sperm individualization, differentiation of the sperm flagellum and tubulin polyglycylation of axonemal microtubules. This chain is Cilia- and flagella-associated protein 20, found in Drosophila melanogaster (Fruit fly).